The chain runs to 333 residues: Glycerol-3-phosphate dehydrogenase [NAD(P)+] (333 aa).

Trp12, Lys33, and Lys105 together coordinate NADPH. Sn-glycerol 3-phosphate-binding residues include Lys105, Gly136, and Ser138. Ala140 provides a ligand contact to NADPH. Lys191, Asp244, Ser254, Arg255, and Asn256 together coordinate sn-glycerol 3-phosphate. Lys191 functions as the Proton acceptor in the catalytic mechanism. Arg255 contacts NADPH. Val279 and Glu281 together coordinate NADPH.

The protein belongs to the NAD-dependent glycerol-3-phosphate dehydrogenase family.

It localises to the cytoplasm. It carries out the reaction sn-glycerol 3-phosphate + NAD(+) = dihydroxyacetone phosphate + NADH + H(+). The catalysed reaction is sn-glycerol 3-phosphate + NADP(+) = dihydroxyacetone phosphate + NADPH + H(+). Its pathway is membrane lipid metabolism; glycerophospholipid metabolism. In terms of biological role, catalyzes the reduction of the glycolytic intermediate dihydroxyacetone phosphate (DHAP) to sn-glycerol 3-phosphate (G3P), the key precursor for phospholipid synthesis. The protein is Glycerol-3-phosphate dehydrogenase [NAD(P)+] of Protochlamydia amoebophila (strain UWE25).